The following is a 452-amino-acid chain: Bifunctional protein GlmU (452 aa).

Positions 1 to 218 are pyrophosphorylase; the sequence is MKVLILAAGL…IVEVSGVNDR (218 aa). Residues 6 to 9, Lys-20, Gln-68, 73 to 74, 95 to 97, Gly-134, Glu-147, Asn-162, and Asn-216 each bind UDP-N-acetyl-alpha-D-glucosamine; these read LAAG, GT, and YGD. Asp-97 serves as a coordination point for Mg(2+). Position 216 (Asn-216) interacts with Mg(2+). The tract at residues 219–239 is linker; the sequence is IQLAQLETIAKQRILEKLMLS. An N-acetyltransferase region spans residues 240–452; that stretch reads GVTIVDPNST…EELKNADHKE (213 aa). UDP-N-acetyl-alpha-D-glucosamine-binding residues include Arg-321 and Lys-339. The active-site Proton acceptor is His-351. UDP-N-acetyl-alpha-D-glucosamine-binding residues include Tyr-354 and Asn-365. Residues Ala-368, 374–375, Ser-393, Ala-411, and Arg-428 each bind acetyl-CoA; that span reads NY.

The protein in the N-terminal section; belongs to the N-acetylglucosamine-1-phosphate uridyltransferase family. This sequence in the C-terminal section; belongs to the transferase hexapeptide repeat family. As to quaternary structure, homotrimer. Requires Mg(2+) as cofactor.

It is found in the cytoplasm. The enzyme catalyses alpha-D-glucosamine 1-phosphate + acetyl-CoA = N-acetyl-alpha-D-glucosamine 1-phosphate + CoA + H(+). It catalyses the reaction N-acetyl-alpha-D-glucosamine 1-phosphate + UTP + H(+) = UDP-N-acetyl-alpha-D-glucosamine + diphosphate. It functions in the pathway nucleotide-sugar biosynthesis; UDP-N-acetyl-alpha-D-glucosamine biosynthesis; N-acetyl-alpha-D-glucosamine 1-phosphate from alpha-D-glucosamine 6-phosphate (route II): step 2/2. Its pathway is nucleotide-sugar biosynthesis; UDP-N-acetyl-alpha-D-glucosamine biosynthesis; UDP-N-acetyl-alpha-D-glucosamine from N-acetyl-alpha-D-glucosamine 1-phosphate: step 1/1. It participates in bacterial outer membrane biogenesis; LPS lipid A biosynthesis. Catalyzes the last two sequential reactions in the de novo biosynthetic pathway for UDP-N-acetylglucosamine (UDP-GlcNAc). The C-terminal domain catalyzes the transfer of acetyl group from acetyl coenzyme A to glucosamine-1-phosphate (GlcN-1-P) to produce N-acetylglucosamine-1-phosphate (GlcNAc-1-P), which is converted into UDP-GlcNAc by the transfer of uridine 5-monophosphate (from uridine 5-triphosphate), a reaction catalyzed by the N-terminal domain. The polypeptide is Bifunctional protein GlmU (Fervidobacterium nodosum (strain ATCC 35602 / DSM 5306 / Rt17-B1)).